The sequence spans 89 residues: Neuropeptide F (89 aa).

Positions 1 to 29 (MASGTFTQRLLVALMIFALIADLSTLVAA) are cleaved as a signal peptide. Position 61 is a phenylalanine amide (phenylalanine 61). Residues 65–89 (GGYLNPAIFGQDEQEVDWQDSTFSR) constitute a propeptide that is removed on maturation.

It belongs to the NPY family.

Its subcellular location is the secreted. Functionally, an integral part of the sensory system that mediates food signaling, providing the neural basis for the regulation of food response; coordinates larval foraging and social behavior changes during development. May have a hormonal role in females. The polypeptide is Neuropeptide F (Anopheles gambiae (African malaria mosquito)).